The primary structure comprises 196 residues: Peptide deformylase (196 aa).

Residues C105 and H147 each coordinate Fe cation. E148 is an active-site residue. H151 lines the Fe cation pocket.

This sequence belongs to the polypeptide deformylase family. Fe(2+) serves as cofactor.

It carries out the reaction N-terminal N-formyl-L-methionyl-[peptide] + H2O = N-terminal L-methionyl-[peptide] + formate. In terms of biological role, removes the formyl group from the N-terminal Met of newly synthesized proteins. Requires at least a dipeptide for an efficient rate of reaction. N-terminal L-methionine is a prerequisite for activity but the enzyme has broad specificity at other positions. The protein is Peptide deformylase of Christiangramia forsetii (strain DSM 17595 / CGMCC 1.15422 / KT0803) (Gramella forsetii).